Here is a 217-residue protein sequence, read N- to C-terminus: Nucleoside diphosphate kinase homolog 5 (217 aa).

The NDK stretch occupies residues 18 to 151 (ERTLALIKPD…REIRFMFPHS (134 aa)).

It belongs to the NDK family.

It is found in the cell projection. The protein resides in the cilium. Its function is as follows. Functions as part of axonemal radial spoke complexes that play an important part in the motility of sperm and cilia. Does not seem to have nucleoside diphosphate kinase (NDPK) activity. Exhibits a 3'-5' exonuclease activity with a preference for single-stranded DNA, suggesting roles in DNA proofreading and repair. The chain is Nucleoside diphosphate kinase homolog 5 (nme5) from Danio rerio (Zebrafish).